A 101-amino-acid polypeptide reads, in one-letter code: Large ribosomal subunit protein uL24 (101 aa).

Belongs to the universal ribosomal protein uL24 family. In terms of assembly, part of the 50S ribosomal subunit.

Functionally, one of two assembly initiator proteins, it binds directly to the 5'-end of the 23S rRNA, where it nucleates assembly of the 50S subunit. In terms of biological role, one of the proteins that surrounds the polypeptide exit tunnel on the outside of the subunit. The sequence is that of Large ribosomal subunit protein uL24 from Ligilactobacillus salivarius (strain UCC118) (Lactobacillus salivarius).